Here is a 380-residue protein sequence, read N- to C-terminus: Gonadotropin-releasing hormone II receptor (380 aa).

At 1–40 the chain is on the extracellular side; the sequence is MSAVNGTPWGSSAREEVWAGSGVEVEGSELPTFSTAAKVR. Residues 41-60 form a helical membrane-spanning segment; it reads VGVTIVLFVSSAGGNLAVLW. Over 61–76 the chain is Cytoplasmic; the sequence is SVTRPQPSQLRPSPVR. The chain crosses the membrane as a helical span at residues 77–96; it reads RLFAHLAAADLLVTFVVMPL. The Extracellular portion of the chain corresponds to 97 to 114; that stretch reads DATWNITVQWLAGDIACR. Asn-101 carries N-linked (GlcNAc...) asparagine glycosylation. The cysteines at positions 113 and 188 are disulfide-linked. Residues 115 to 136 traverse the membrane as a helical segment; it reads TLMFLKLMAMYAAAFLPVVIGL. At 137–160 the chain is on the cytoplasmic side; the sequence is DRQAAVLNPLGSRSGVRKLLGAAW. The chain crosses the membrane as a helical span at residues 161–178; that stretch reads GLSFLLALPQLFLFHTVH. Topologically, residues 179–204 are extracellular; that stretch reads RAGPVPFTQCATKGSFKARWQETTYN. A helical transmembrane segment spans residues 205–224; sequence LFTFCCLFLLPLTAMAICYS. Residues 225-278 are Cytoplasmic-facing; the sequence is RIVLGVSSPRTRKGSHAPAGEFALRRSFDNRPRVRLRALRLALLVLLTFILCWT. A helical transmembrane segment spans residues 279 to 297; it reads PYYLLGLWYWFSPSMLSEV. Residues 298 to 303 lie on the Extracellular side of the membrane; it reads PPSLSH. The chain crosses the membrane as a helical span at residues 304-323; sequence ILFLFGLLNAPLDPLLYGAF. At 324–380 the chain is on the cytoplasmic side; the sequence is TLGCRRGHQELSMDSSREEGSRRMFQQDIQALRQTEVQKTVTSRKAGETKDIPITSI.

It belongs to the G-protein coupled receptor 1 family. Post-translationally, phosphorylated on the C-terminal cytoplasmic tail.

The protein localises to the cell membrane. In terms of biological role, receptor for gonadotropin releasing hormone II (GnRH II). This receptor mediates its action by association with G proteins that activate a phosphatidylinositol-calcium second messenger system. This is Gonadotropin-releasing hormone II receptor (GNRHR2) from Callithrix jacchus (White-tufted-ear marmoset).